The primary structure comprises 200 residues: Charged multivesicular body protein 6 (200 aa).

The N-myristoyl glycine moiety is linked to residue Gly-2. A coiled-coil region spans residues Arg-10 to Thr-94. The Type-2 MIT-interacting motif signature appears at Leu-168–Pro-179. The segment at Glu-169–Ser-200 is disordered.

It belongs to the SNF7 family. As to quaternary structure, probable core component of the endosomal sorting required for transport complex III (ESCRT-III). ESCRT-III components are thought to multimerize to form a flat lattice on the perimeter membrane of the endosome.

The protein resides in the endomembrane system. The protein localises to the late endosome membrane. In terms of biological role, probable core component of the endosomal sorting required for transport complex III (ESCRT-III) which is involved in multivesicular bodies (MVBs) formation and sorting of endosomal cargo proteins into MVBs. MVBs contain intraluminal vesicles (ILVs) that are generated by invagination and scission from the limiting membrane of the endosome and mostly are delivered to lysosomes enabling degradation of membrane proteins, such as stimulated growth factor receptors, lysosomal enzymes and lipids. In the ESCRT-III complex, it probably serves as an acceptor for the ESCRT-II complex on endosomal membranes. The sequence is that of Charged multivesicular body protein 6 (CHMP6) from Gallus gallus (Chicken).